Consider the following 238-residue polypeptide: Protein shisa-3 homolog (238 aa).

A signal peptide spans 1–21 (MGALLAFCLLVGLLRWGPAGA). Topologically, residues 22-98 (QQPGEYCHGW…GITAQPVYVP (77 aa)) are lumenal. A helical membrane pass occupies residues 99–119 (FLIVGSIFIAFIILGSLVAIY). The Cytoplasmic portion of the chain corresponds to 120–238 (CCTCLRPKEP…GKSCPDFSSS (119 aa)).

The protein belongs to the shisa family.

It localises to the endoplasmic reticulum membrane. Plays an essential role in the maturation of presomitic mesoderm cells by individual attenuation of both FGF and WNT signaling. The protein is Protein shisa-3 homolog (Shisa3) of Mus musculus (Mouse).